A 582-amino-acid polypeptide reads, in one-letter code: 15-cis-phytoene desaturase, chloroplastic/chromoplastic (582 aa).

The N-terminal 93 residues, Met-1–Glu-93, are a transit peptide targeting the chloroplast and chromoplast. Residues Ala-121, Glu-140–Ala-141, Lys-148, His-165–Ile-166, and Tyr-171 contribute to the FAD site. Arg-306 serves as a coordination point for substrate. Asp-537 provides a ligand contact to FAD. Ala-545 lines the substrate pocket. An FAD-binding site is contributed by Met-547.

It belongs to the carotenoid/retinoid oxidoreductase family. Homotetramer. Requires FAD as cofactor. As to expression, expressed in flower buds and lips. Lower expression in leaves and roots.

The protein resides in the plastid. The protein localises to the chloroplast. It localises to the chromoplast. It is found in the membrane. The catalysed reaction is 2 a plastoquinone + 15-cis-phytoene = 9,9',15-tri-cis-zeta-carotene + 2 a plastoquinol. It functions in the pathway carotenoid biosynthesis; lycopene biosynthesis. Functionally, converts phytoene into zeta-carotene via the intermediary of phytofluene by the symmetrical introduction of two double bonds at the C-11 and C-11' positions of phytoene with a concomitant isomerization of two neighboring double bonds at the C9 and C9' positions from trans to cis. The chain is 15-cis-phytoene desaturase, chloroplastic/chromoplastic (PDS) from Oncidium hybrid cultivar (Orchid).